A 236-amino-acid polypeptide reads, in one-letter code: 2-C-methyl-D-erythritol 4-phosphate cytidylyltransferase (236 aa).

The protein belongs to the IspD/TarI cytidylyltransferase family. IspD subfamily. Homodimer.

The enzyme catalyses 2-C-methyl-D-erythritol 4-phosphate + CTP + H(+) = 4-CDP-2-C-methyl-D-erythritol + diphosphate. It participates in isoprenoid biosynthesis; isopentenyl diphosphate biosynthesis via DXP pathway; isopentenyl diphosphate from 1-deoxy-D-xylulose 5-phosphate: step 2/6. Catalyzes the formation of 4-diphosphocytidyl-2-C-methyl-D-erythritol from CTP and 2-C-methyl-D-erythritol 4-phosphate (MEP). This chain is 2-C-methyl-D-erythritol 4-phosphate cytidylyltransferase, found in Escherichia coli O157:H7.